A 275-amino-acid polypeptide reads, in one-letter code: Serine/threonine-protein phosphatase PGAM5, mitochondrial (275 aa).

A helical membrane pass occupies residues 7 to 24 (LIAGGSAAAAILGVVAAG).

Belongs to the phosphoglycerate mutase family. BPG-dependent PGAM subfamily. Post-translationally, phosphorylated by the RIPK1/RIPK3 complex under necrotic conditions. This phosphorylation increases PGAM5 phosphatase activity.

It is found in the mitochondrion outer membrane. It carries out the reaction O-phospho-L-seryl-[protein] + H2O = L-seryl-[protein] + phosphate. The catalysed reaction is O-phospho-L-threonyl-[protein] + H2O = L-threonyl-[protein] + phosphate. Its function is as follows. Displays phosphatase activity for serine/threonine residues. Has apparently no phosphoglycerate mutase activity. May be regulator of mitochondrial dynamics. May be a central mediator for programmed necrosis. The protein is Serine/threonine-protein phosphatase PGAM5, mitochondrial (pgam5) of Xenopus laevis (African clawed frog).